The sequence spans 232 residues: Large ribosomal subunit protein uL1 (232 aa).

This sequence belongs to the universal ribosomal protein uL1 family. In terms of assembly, part of the 50S ribosomal subunit.

Binds directly to 23S rRNA. The L1 stalk is quite mobile in the ribosome, and is involved in E site tRNA release. In terms of biological role, protein L1 is also a translational repressor protein, it controls the translation of the L11 operon by binding to its mRNA. This is Large ribosomal subunit protein uL1 from Xylella fastidiosa (strain 9a5c).